Reading from the N-terminus, the 83-residue chain is MSNKGQLLQDPFLNALRREHVPVSIYLVNGIKLQGQIESFDQYVVLLRNTVTQMVYKHAISTIVPGRAVNFSTAEAAGSDASA.

Residues 10-69 form the Sm domain; the sequence is DPFLNALRREHVPVSIYLVNGIKLQGQIESFDQYVVLLRNTVTQMVYKHAISTIVPGRAV.

Belongs to the Hfq family. As to quaternary structure, homohexamer.

Functionally, RNA chaperone that binds small regulatory RNA (sRNAs) and mRNAs to facilitate mRNA translational regulation in response to envelope stress, environmental stress and changes in metabolite concentrations. Also binds with high specificity to tRNAs. The chain is RNA-binding protein Hfq from Delftia acidovorans (strain DSM 14801 / SPH-1).